The primary structure comprises 815 residues: uncharacterized protein (815 aa).

4 disordered regions span residues 123 to 183 (QSNT…QPST), 249 to 274 (NVNN…NNTN), 592 to 668 (IKQN…NLNS), and 765 to 815 (NNEE…EEIK). Polar residues-rich tracts occupy residues 135-154 (SIIT…TSTT) and 174-183 (DSITVLQPST). Over residues 595 to 611 (NGSSSSNNNSKLSSTNS) the composition is skewed to low complexity. The segment covering 612–639 (GQTSDNPINSSNGGQSIKKQGSNLSLNR) has biased composition (polar residues). Positions 640–668 (QQSSTKLNNQSNNNNNNNANTTNQNNLNS) are enriched in low complexity. Residues 765-782 (NNEEHNNNNKENNNENNK) show a composition bias toward basic and acidic residues. Low complexity predominate over residues 783 to 809 (ENINNNNNIINNNNDNNCNENNNNCNE).

This is an uncharacterized protein from Dictyostelium discoideum (Social amoeba).